The following is a 251-amino-acid chain: 5'-nucleotidase SurE (251 aa).

A divalent metal cation-binding residues include Asp8, Asp9, Ser42, and Asn94.

It belongs to the SurE nucleotidase family. A divalent metal cation is required as a cofactor.

It localises to the cytoplasm. It carries out the reaction a ribonucleoside 5'-phosphate + H2O = a ribonucleoside + phosphate. Nucleotidase that shows phosphatase activity on nucleoside 5'-monophosphates. The chain is 5'-nucleotidase SurE from Hydrogenovibrio crunogenus (strain DSM 25203 / XCL-2) (Thiomicrospira crunogena).